A 57-amino-acid polypeptide reads, in one-letter code: uncharacterized protein (57 aa).

This is an uncharacterized protein from Saccharomyces cerevisiae (strain ATCC 204508 / S288c) (Baker's yeast).